Reading from the N-terminus, the 449-residue chain is Adenylyltransferase and sulfurtransferase MOCS3 (449 aa).

ATP is bound by residues glycine 96, aspartate 117, 124–128 (SNLHR), lysine 141, and 185–186 (DN). Zn(2+) contacts are provided by cysteine 227 and cysteine 230. Cysteine 244 functions as the Glycyl thioester intermediate; for adenylyltransferase activity in the catalytic mechanism. The Zn(2+) site is built by cysteine 302 and cysteine 305. Residues 351–447 (QDKPHLLLDV…WTNQIDENFP (97 aa)) form the Rhodanese domain. The Cysteine persulfide intermediate; for sulfurtransferase activity role is filled by cysteine 406.

In the N-terminal section; belongs to the HesA/MoeB/ThiF family. UBA4 subfamily. It depends on Zn(2+) as a cofactor.

It is found in the cytoplasm. The protein localises to the cytosol. The catalysed reaction is [molybdopterin-synthase sulfur-carrier protein]-C-terminal Gly-Gly + ATP + H(+) = [molybdopterin-synthase sulfur-carrier protein]-C-terminal Gly-Gly-AMP + diphosphate. The enzyme catalyses [molybdopterin-synthase sulfur-carrier protein]-C-terminal Gly-Gly-AMP + S-sulfanyl-L-cysteinyl-[cysteine desulfurase] + AH2 = [molybdopterin-synthase sulfur-carrier protein]-C-terminal-Gly-aminoethanethioate + L-cysteinyl-[cysteine desulfurase] + A + AMP + 2 H(+). It participates in tRNA modification; 5-methoxycarbonylmethyl-2-thiouridine-tRNA biosynthesis. The protein operates within cofactor biosynthesis; molybdopterin biosynthesis. In terms of biological role, plays a central role in 2-thiolation of mcm(5)S(2)U at tRNA wobble positions of cytosolic tRNA(Lys), tRNA(Glu) and tRNA(Gln). Also essential during biosynthesis of the molybdenum cofactor. Acts by mediating the C-terminal thiocarboxylation of sulfur carriers URM1 and MOCS2A. Its N-terminus first activates URM1 and MOCS2A as acyl-adenylates (-COAMP), then the persulfide sulfur on the catalytic cysteine is transferred to URM1 and MOCS2A to form thiocarboxylation (-COSH) of their C-terminus. The reaction probably involves hydrogen sulfide that is generated from the persulfide intermediate and that acts as a nucleophile towards URM1 and MOCS2A. Subsequently, a transient disulfide bond is formed. Does not use thiosulfate as sulfur donor; NFS1 probably acting as a sulfur donor for thiocarboxylation reactions. This chain is Adenylyltransferase and sulfurtransferase MOCS3, found in Drosophila grimshawi (Hawaiian fruit fly).